We begin with the raw amino-acid sequence, 255 residues long: Type III pantothenate kinase (255 aa).

Residue 6–13 coordinates ATP; that stretch reads DVGNTHIV. Substrate contacts are provided by residues tyrosine 100 and 107-110; that span reads GADR. Residue aspartate 109 is the Proton acceptor of the active site. Aspartate 129 contributes to the K(+) binding site. Threonine 132 provides a ligand contact to ATP. Threonine 184 lines the substrate pocket.

It belongs to the type III pantothenate kinase family. In terms of assembly, homodimer. Requires NH4(+) as cofactor. The cofactor is K(+).

The protein resides in the cytoplasm. It carries out the reaction (R)-pantothenate + ATP = (R)-4'-phosphopantothenate + ADP + H(+). It functions in the pathway cofactor biosynthesis; coenzyme A biosynthesis; CoA from (R)-pantothenate: step 1/5. Its function is as follows. Catalyzes the phosphorylation of pantothenate (Pan), the first step in CoA biosynthesis. This is Type III pantothenate kinase from Ruminiclostridium cellulolyticum (strain ATCC 35319 / DSM 5812 / JCM 6584 / H10) (Clostridium cellulolyticum).